Reading from the N-terminus, the 1153-residue chain is Cingulin (1153 aa).

The head stretch occupies residues 1-342 (MAEPRGPVDH…LVMTTGSAKV (342 aa)). Residues 17-37 (ITEPAGDAQMRTGRRPAKDAR) are disordered. The ZIM signature appears at 38–52 (ANTYGVAVRVQGIAG). The segment at 44-57 (AVRVQGIAGQPFVV) is interaction with TJP1/ZO1. Phosphoserine occurs at positions 86, 126, 128, 131, 146, 205, 208, and 324. Disordered regions lie at residues 131 to 151 (SLLGPAPLGPGHRSTSLLELG) and 177 to 253 (DRHQ…SRAR). Over residues 207–220 (DSRHLRDPPEDRRS) the composition is skewed to basic and acidic residues. Residues 343-1110 (LAGQGELAQK…ALEKDSWRKA (768 aa)) are a coiled coil. Position 562 is an N6-acetyllysine (lysine 562). 3 disordered regions span residues 755–796 (AQRG…QKRL), 823–861 (QSQLEDYKEKSRREVADAQRQAKEWASEAEKSSGGLSRL), and 1110–1131 (AARSAAESSLQQEGLSSDEEFD). Basic and acidic residues-rich tracts occupy residues 772–796 (ALEEEGKQREALRRGKAELEEQKRL) and 827–853 (EDYKEKSRREVADAQRQAKEWASEAEK). A tail region spans residues 1111–1153 (ARSAAESSLQQEGLSSDEEFDGVYNPNSIASLLTESGLQTSSC). A compositionally biased stretch (polar residues) spans 1115-1124 (AESSLQQEGL). Serine 1125 and serine 1126 each carry phosphoserine.

Belongs to the cingulin family. In terms of assembly, homodimer. Interacts with TJP1/ZO1 and SPEF1.

Its subcellular location is the cell junction. It is found in the tight junction. Functionally, probably plays a role in the formation and regulation of the tight junction (TJ) paracellular permeability barrier. In Sorex araneus (Eurasian common shrew), this protein is Cingulin.